The chain runs to 400 residues: Tryptophan synthase beta chain (400 aa).

N6-(pyridoxal phosphate)lysine is present on K92.

This sequence belongs to the TrpB family. In terms of assembly, tetramer of two alpha and two beta chains. It depends on pyridoxal 5'-phosphate as a cofactor.

It carries out the reaction (1S,2R)-1-C-(indol-3-yl)glycerol 3-phosphate + L-serine = D-glyceraldehyde 3-phosphate + L-tryptophan + H2O. It functions in the pathway amino-acid biosynthesis; L-tryptophan biosynthesis; L-tryptophan from chorismate: step 5/5. Functionally, the beta subunit is responsible for the synthesis of L-tryptophan from indole and L-serine. The chain is Tryptophan synthase beta chain from Neisseria meningitidis serogroup A / serotype 4A (strain DSM 15465 / Z2491).